The chain runs to 61 residues: MIPVRCFSCGKVISSVWEEYRERIKSEPPGKVMDDLGIERYCCRRMLLSHVEVVEMLRRYQ.

Zn(2+) is bound by residues cysteine 6, cysteine 9, cysteine 42, and cysteine 43.

The protein belongs to the archaeal Rpo10/eukaryotic RPB10 RNA polymerase subunit family. As to quaternary structure, part of the RNA polymerase complex. The cofactor is Zn(2+).

It localises to the cytoplasm. The catalysed reaction is RNA(n) + a ribonucleoside 5'-triphosphate = RNA(n+1) + diphosphate. In terms of biological role, DNA-dependent RNA polymerase (RNAP) catalyzes the transcription of DNA into RNA using the four ribonucleoside triphosphates as substrates. This Methanothrix thermoacetophila (strain DSM 6194 / JCM 14653 / NBRC 101360 / PT) (Methanosaeta thermophila) protein is DNA-directed RNA polymerase subunit Rpo10.